We begin with the raw amino-acid sequence, 188 residues long: dCTP deaminase (188 aa).

Residue 109-114 (KSTYAR) participates in dCTP binding. Glutamate 135 (proton donor/acceptor) is an active-site residue. The dCTP site is built by glutamine 154, tyrosine 168, and glutamine 178.

It belongs to the dCTP deaminase family. In terms of assembly, homotrimer.

The catalysed reaction is dCTP + H2O + H(+) = dUTP + NH4(+). Its pathway is pyrimidine metabolism; dUMP biosynthesis; dUMP from dCTP (dUTP route): step 1/2. Functionally, catalyzes the deamination of dCTP to dUTP. This Helicobacter pylori (strain P12) protein is dCTP deaminase.